A 127-amino-acid polypeptide reads, in one-letter code: Holo-[acyl-carrier-protein] synthase (127 aa).

Mg(2+)-binding residues include Asp-7 and Glu-56.

It belongs to the P-Pant transferase superfamily. AcpS family. Mg(2+) serves as cofactor.

The protein localises to the cytoplasm. It catalyses the reaction apo-[ACP] + CoA = holo-[ACP] + adenosine 3',5'-bisphosphate + H(+). Its function is as follows. Transfers the 4'-phosphopantetheine moiety from coenzyme A to a Ser of acyl-carrier-protein. This Leptospira biflexa serovar Patoc (strain Patoc 1 / Ames) protein is Holo-[acyl-carrier-protein] synthase.